Reading from the N-terminus, the 548-residue chain is Chaperonin GroEL (548 aa).

Residues 30-33 (TLGP), Lys51, 87-91 (DGTTT), Gly415, 479-481 (NAA), and Asp495 contribute to the ATP site.

This sequence belongs to the chaperonin (HSP60) family. Forms a cylinder of 14 subunits composed of two heptameric rings stacked back-to-back. Interacts with the co-chaperonin GroES.

The protein resides in the cytoplasm. The enzyme catalyses ATP + H2O + a folded polypeptide = ADP + phosphate + an unfolded polypeptide.. Functionally, together with its co-chaperonin GroES, plays an essential role in assisting protein folding. The GroEL-GroES system forms a nano-cage that allows encapsulation of the non-native substrate proteins and provides a physical environment optimized to promote and accelerate protein folding. This Vibrio campbellii (strain ATCC BAA-1116) protein is Chaperonin GroEL.